A 483-amino-acid polypeptide reads, in one-letter code: NADH-quinone oxidoreductase subunit N (483 aa).

The next 14 membrane-spanning stretches (helical) occupy residues 13–33 (ALPE…DAAV), 39–57 (YLAY…FLTV), 76–96 (PLSD…LVYS), 110–130 (FFVL…ASHF), 131–151 (LTLY…VALQ), 165–185 (FVLG…VYGV), 206–226 (IPLV…LGAV), 240–260 (PTAM…AFVV), 277–297 (MLVI…IAQS), 302–322 (MFAY…LAGS), 330–350 (MFYV…ILLL), 373–393 (LAFV…TVGF), 406–426 (IGYV…AFYY), and 459–479 (LAVL…VQAI).

This sequence belongs to the complex I subunit 2 family. As to quaternary structure, NDH-1 is composed of 14 different subunits. Subunits NuoA, H, J, K, L, M, N constitute the membrane sector of the complex.

It localises to the cell inner membrane. The enzyme catalyses a quinone + NADH + 5 H(+)(in) = a quinol + NAD(+) + 4 H(+)(out). Its function is as follows. NDH-1 shuttles electrons from NADH, via FMN and iron-sulfur (Fe-S) centers, to quinones in the respiratory chain. The immediate electron acceptor for the enzyme in this species is believed to be ubiquinone. Couples the redox reaction to proton translocation (for every two electrons transferred, four hydrogen ions are translocated across the cytoplasmic membrane), and thus conserves the redox energy in a proton gradient. The protein is NADH-quinone oxidoreductase subunit N of Thiobacillus denitrificans (strain ATCC 25259 / T1).